A 267-amino-acid chain; its full sequence is Pyridoxine 5'-phosphate synthase (267 aa).

Asn-8 is a 3-amino-2-oxopropyl phosphate binding site. 10–11 (DH) provides a ligand contact to 1-deoxy-D-xylulose 5-phosphate. 3-amino-2-oxopropyl phosphate is bound at residue Arg-19. His-44 (proton acceptor) is an active-site residue. Residues Arg-46 and His-51 each coordinate 1-deoxy-D-xylulose 5-phosphate. The active-site Proton acceptor is the Glu-71. Thr-101 serves as a coordination point for 1-deoxy-D-xylulose 5-phosphate. His-219 functions as the Proton donor in the catalytic mechanism. 3-amino-2-oxopropyl phosphate contacts are provided by residues Gly-220 and 241–242 (GH).

It belongs to the PNP synthase family. As to quaternary structure, homooctamer; tetramer of dimers.

The protein resides in the cytoplasm. The catalysed reaction is 3-amino-2-oxopropyl phosphate + 1-deoxy-D-xylulose 5-phosphate = pyridoxine 5'-phosphate + phosphate + 2 H2O + H(+). It functions in the pathway cofactor biosynthesis; pyridoxine 5'-phosphate biosynthesis; pyridoxine 5'-phosphate from D-erythrose 4-phosphate: step 5/5. Functionally, catalyzes the complicated ring closure reaction between the two acyclic compounds 1-deoxy-D-xylulose-5-phosphate (DXP) and 3-amino-2-oxopropyl phosphate (1-amino-acetone-3-phosphate or AAP) to form pyridoxine 5'-phosphate (PNP) and inorganic phosphate. The chain is Pyridoxine 5'-phosphate synthase from Helicobacter hepaticus (strain ATCC 51449 / 3B1).